We begin with the raw amino-acid sequence, 427 residues long: Enolase (427 aa).

Glutamine 163 is a binding site for (2R)-2-phosphoglycerate. Glutamate 205 functions as the Proton donor in the catalytic mechanism. Residues aspartate 242, glutamate 285, and aspartate 312 each coordinate Mg(2+). Residues lysine 337, arginine 366, serine 367, and lysine 388 each contribute to the (2R)-2-phosphoglycerate site. The Proton acceptor role is filled by lysine 337.

It belongs to the enolase family. Mg(2+) serves as cofactor.

It is found in the cytoplasm. It localises to the secreted. Its subcellular location is the cell surface. The enzyme catalyses (2R)-2-phosphoglycerate = phosphoenolpyruvate + H2O. Its pathway is carbohydrate degradation; glycolysis; pyruvate from D-glyceraldehyde 3-phosphate: step 4/5. In terms of biological role, catalyzes the reversible conversion of 2-phosphoglycerate (2-PG) into phosphoenolpyruvate (PEP). It is essential for the degradation of carbohydrates via glycolysis. This is Enolase from Paraburkholderia phymatum (strain DSM 17167 / CIP 108236 / LMG 21445 / STM815) (Burkholderia phymatum).